We begin with the raw amino-acid sequence, 156 residues long: MAPARAGFCPLLLLLLLGLWVAEIPVSAKPKGMTSSQWFKIQHMQPSPQACNSAMKNINKHTKRCKDLNTFLHEPFSSVAATCQTPKIACKNGDKNCHQSHGAVSLTMCKLTSGKHPNCRYKEKRQNKSYVVACKPPQKKDSQQFHLVPVHLDRVL.

The N-terminal stretch at 1–28 (MAPARAGFCPLLLLLLLGLWVAEIPVSA) is a signal peptide. Residues 29-32 (KPKG) are important for antibacterial activity. The active-site Proton acceptor is the H43. Residues H43, K66, N69, and T70 each coordinate dUMP. Disulfide bonds link C51-C109, C65-C119, C83-C134, and C90-C97. N-linked (GlcNAc...) asparagine glycosylation occurs at N127. The important for antibacterial activity stretch occupies residues 139 to 140 (KK). Residues H151 and R154 each coordinate dUMP. H151 (proton donor) is an active-site residue.

Expressed in collecting ducts in kidney, and in apical uroepithelium in bladder (at protein level). Expressed in various epithelial tissues including skin, respiratory tract, genito-urinary tract and, at a low level, in the gut. Expressed in liver, kidney, skeletal muscle and heart.

It is found in the secreted. In terms of biological role, exhibits a potent RNase activity. Has broad-spectrum antimicrobial activity against many pathogenic microorganisms including uropathogenic E.coli (UPEC), and remarkably potent activity (lethal dose of 90% &lt; 30 nM) against a vancomycin resistant Enterococcus faecium. Causes loss of bacterial membrane integrity. Probably contributes to urinary tract sterility. Bactericidal activity is independent of RNase activity. This chain is Ribonuclease 7 (RNASE7), found in Homo sapiens (Human).